The primary structure comprises 61 residues: [Thr6, Val10, Asp11]-phyllokinin (61 aa).

A signal peptide spans 1–22 (MSFLKKSLFLVLFLGLVSFSIC). The propeptide occupies 23-50 (EEEKRETEEEENEDEMNEESEEKRESPE). Residues 24–61 (EEKRETEEEENEDEMNEESEEKRESPERPPGFTPFRVD) form a disordered region. The span at 30-42 (EEEENEDEMNEES) shows a compositional bias: acidic residues.

It belongs to the frog skin active peptide (FSAP) family. Bradykinin-related peptide subfamily. As to expression, expressed by the skin glands.

The protein resides in the secreted. Functionally, induces relaxation of rat smooth muscle from tail artery and contraction of that from ileum, urinary bladder and uterus. Binds to both bradykinin receptor B1 (BDKRB1) and B2 (BDKRB2). The sequence is that of [Thr6, Val10, Asp11]-phyllokinin from Agalychnis spurrelli (Gliding leaf frog).